The following is a 461-amino-acid chain: Ornithine decarboxylase (461 aa).

Lys69 carries the N6-(pyridoxal phosphate)lysine modification. Pyridoxal 5'-phosphate-binding positions include Ser200, Gly237, and 274 to 277; that span reads EPGR. A Phosphoserine; by CK2 modification is found at Ser303. Substrate is bound at residue 331–332; it reads YD. Cys360 serves as the catalytic Proton donor; shared with dimeric partner. An S-nitrosocysteine modification is found at Cys360. Asp361 lines the substrate pocket. Residue Tyr389 coordinates pyridoxal 5'-phosphate.

Belongs to the Orn/Lys/Arg decarboxylase class-II family. As to quaternary structure, homodimer. Only the dimer is catalytically active, as the active sites are constructed of residues from both monomers. Pyridoxal 5'-phosphate is required as a cofactor.

The enzyme catalyses L-ornithine + H(+) = putrescine + CO2. It functions in the pathway amine and polyamine biosynthesis; putrescine biosynthesis via L-ornithine pathway; putrescine from L-ornithine: step 1/1. Its activity is regulated as follows. Inhibited by antizymes (AZs) OAZ1, OAZ2 and OAZ3 in response to polyamine levels. AZs inhibit the assembly of the functional homodimer by binding to ODC monomers. Additionally, OAZ1 targets ODC monomers for ubiquitin-independent proteolytic destruction by the 26S proteasome. In terms of biological role, catalyzes the first and rate-limiting step of polyamine biosynthesis that converts ornithine into putrescine, which is the precursor for the polyamines, spermidine and spermine. Polyamines are essential for cell proliferation and are implicated in cellular processes, ranging from DNA replication to apoptosis. The sequence is that of Ornithine decarboxylase (Odc1) from Mus pahari (Gairdner's shrew-mouse).